Consider the following 481-residue polypeptide: Cobyric acid synthase (481 aa).

Residues 248-435 enclose the GATase cobBQ-type domain; that stretch reads ALTVAWLAFS…LHGMFGADGF (188 aa). The active-site Nucleophile is the Cys-330. The active site involves His-427.

Belongs to the CobB/CobQ family. CobQ subfamily.

The protein operates within cofactor biosynthesis; adenosylcobalamin biosynthesis. Its function is as follows. Catalyzes amidations at positions B, D, E, and G on adenosylcobyrinic A,C-diamide. NH(2) groups are provided by glutamine, and one molecule of ATP is hydrogenolyzed for each amidation. This is Cobyric acid synthase from Cereibacter sphaeroides (strain ATCC 17023 / DSM 158 / JCM 6121 / CCUG 31486 / LMG 2827 / NBRC 12203 / NCIMB 8253 / ATH 2.4.1.) (Rhodobacter sphaeroides).